We begin with the raw amino-acid sequence, 269 residues long: WW domain-binding protein 1 (269 aa).

Short sequence motifs (PPxY motif) lie at residues 124 to 127 (PPAY) and 137 to 141 (PPPPY). Disordered stretches follow at residues 169–203 (EGTNVEGVSSHQSAPPHQEGEPGAGVTPASTPPSC) and 249–269 (PPESVPQIFPMGLSSSEGDIP). Positions 174–183 (EGVSSHQSAP) are enriched in polar residues.

Interacts with NEDD4. Binds to the WW domain of YAP1, WWP1 and WWP2. Interacts with WWOX. As to expression, expressed in most tissues but at significantly lower levels in placenta, lung, liver, and kidney.

In Homo sapiens (Human), this protein is WW domain-binding protein 1 (WBP1).